Here is a 324-residue protein sequence, read N- to C-terminus: Rho crystallin (324 aa).

N-acetylthreonine is present on Thr2. An NADP(+)-binding site is contributed by 218–281; that stretch reads SVLGSHRDRN…SFTPARIKQN (64 aa).

This sequence belongs to the aldo/keto reductase family. In terms of assembly, monomer.

This is Rho crystallin from Rana temporaria (European common frog).